A 372-amino-acid chain; its full sequence is Envelope phospholipase OPG057 (372 aa).

The YPPL motif lies at 153–156 (YPPL). 2 S-palmitoyl cysteine; by host lipidation sites follow: C185 and C186. One can recognise a PLD phosphodiesterase domain in the interval 307–334 (FTIQNNTKLLIVDDEYVHITSANFDGTH).

The protein belongs to the orthopoxvirus OPG057 family. As to quaternary structure, interacts with protein OPG190/B5. In terms of processing, palmitoylated. Attachment of the palmitate moiety is essential for correct intracellular targeting and protein function.

Its subcellular location is the virion membrane. It is found in the host Golgi apparatus. It localises to the host trans-Golgi network. The protein localises to the host endoplasmic reticulum membrane. The catalysed reaction is a 1,2-diacyl-sn-glycero-3-phosphocholine + H2O = a 1,2-diacyl-sn-glycero-3-phosphate + choline + H(+). In terms of biological role, major envelope protein that plays a role in the biogenesis of the viral double membrane and in egress of virus from the host cell. Produces the wrapped form of virus that is required for cell-to-cell spread. Acts as a lipase with broad specificity including phospholipase C, phospholipase A, and triacylglycerol lipase activities. This Vaccinia virus (strain Western Reserve) (VACV) protein is Envelope phospholipase OPG057 (OPG057).